A 332-amino-acid polypeptide reads, in one-letter code: mRNA-decapping enzyme 1 (332 aa).

Positions 141–173 (ARAAKAASEAPQASVPAPTQAPAAPAQAPQMAP) are enriched in low complexity. Residues 141-175 (ARAAKAASEAPQASVPAPTQAPAAPAQAPQMAPQA) are disordered.

It belongs to the DCP1 family. In terms of assembly, may be a component of the decapping complex composed of dcap-1 and dcap-2. In terms of tissue distribution, expressed in neurons including touch receptor neurons and motor neurons.

It is found in the cytoplasm. Its subcellular location is the cytoplasmic granule. Its function is as follows. Component of the decapping complex necessary for the degradation of mRNAs, both in normal mRNA turnover and in nonsense-mediated mRNA decay. In contrast to orthologs, does not possess decapping activity and does not remove the 7-methyl guanine cap structure from mRNA molecules. In the nervous system, negatively regulates the expression of insulin-like peptide ins-7, which in turn promotes longevity. This may in part be through promoting the activity of daf-16 in distal tissues. Required for the developmental axon guidance and regrowth of PLM touch receptor neurons. In ADL sensory neurons, plays a role in ciliary shape formation. Acts in neurons to promote larval survival at high temperatures by negatively regulating lin-14 expression. The sequence is that of mRNA-decapping enzyme 1 from Caenorhabditis elegans.